Consider the following 107-residue polypeptide: MKTADSSLLADIREVNLSYLLLAQRMLRDDYAASMFRLGFSNEVADILMRLSPAQLVKLASSSSLLCRFRFDDYSLLSALTQDVLGGALQQAHATILLARQPVEELA.

It belongs to the FlhD family. In terms of assembly, homodimer; disulfide-linked. Forms a heterohexamer composed of two FlhC and four FlhD subunits. Each FlhC binds a FlhD dimer, forming a heterotrimer, and a hexamer assembles by dimerization of two heterotrimers.

Its subcellular location is the cytoplasm. Functionally, functions in complex with FlhC as a master transcriptional regulator that regulates transcription of several flagellar and non-flagellar operons by binding to their promoter region. Activates expression of class 2 flagellar genes, including fliA, which is a flagellum-specific sigma factor that turns on the class 3 genes. Also regulates genes whose products function in a variety of physiological pathways. The sequence is that of Flagellar transcriptional regulator FlhD from Bordetella bronchiseptica (strain ATCC BAA-588 / NCTC 13252 / RB50) (Alcaligenes bronchisepticus).